The following is a 489-amino-acid chain: Lysine--tRNA ligase (489 aa).

The Mg(2+) site is built by Glu-399 and Glu-406.

The protein belongs to the class-II aminoacyl-tRNA synthetase family. In terms of assembly, homodimer. Mg(2+) serves as cofactor.

Its subcellular location is the cytoplasm. It carries out the reaction tRNA(Lys) + L-lysine + ATP = L-lysyl-tRNA(Lys) + AMP + diphosphate. The protein is Lysine--tRNA ligase (lysS) of Mycoplasma pneumoniae (strain ATCC 29342 / M129 / Subtype 1) (Mycoplasmoides pneumoniae).